We begin with the raw amino-acid sequence, 375 residues long: Glutamate 5-kinase (375 aa).

Residue Lys-3 participates in ATP binding. The substrate site is built by Ser-44, Asp-131, and Asn-143. Residues 163 to 164 (SD) and 205 to 211 (TGGMVTK) contribute to the ATP site. In terms of domain architecture, PUA spans 269-346 (EGTLWVDDGA…GDIEALLGYR (78 aa)).

The protein belongs to the glutamate 5-kinase family.

The protein localises to the cytoplasm. It carries out the reaction L-glutamate + ATP = L-glutamyl 5-phosphate + ADP. It functions in the pathway amino-acid biosynthesis; L-proline biosynthesis; L-glutamate 5-semialdehyde from L-glutamate: step 1/2. Catalyzes the transfer of a phosphate group to glutamate to form L-glutamate 5-phosphate. This is Glutamate 5-kinase from Rhodospirillum rubrum (strain ATCC 11170 / ATH 1.1.1 / DSM 467 / LMG 4362 / NCIMB 8255 / S1).